The following is a 75-amino-acid chain: Small ribosomal subunit protein bS18 (75 aa).

Belongs to the bacterial ribosomal protein bS18 family. As to quaternary structure, part of the 30S ribosomal subunit. Forms a tight heterodimer with protein bS6.

Binds as a heterodimer with protein bS6 to the central domain of the 16S rRNA, where it helps stabilize the platform of the 30S subunit. This is Small ribosomal subunit protein bS18 from Methylobacillus flagellatus (strain ATCC 51484 / DSM 6875 / VKM B-1610 / KT).